The following is a 2021-amino-acid chain: HEAT repeat-containing protein 5A (2021 aa).

HEAT repeat units lie at residues 795–836 and 1059–1096; these read SQRP…HLAS and VNLS…REAA. 2 disordered regions span residues 1503–1528 and 1989–2012; these read EGNG…LPAD and RGNQ…HGSP. Positions 1512–1522 are enriched in polar residues; it reads VTPTSMGQERG.

It belongs to the HEATR5 family.

The chain is HEAT repeat-containing protein 5A (heatr5a) from Xenopus tropicalis (Western clawed frog).